The sequence spans 298 residues: Ribosomal RNA small subunit methyltransferase H (298 aa).

S-adenosyl-L-methionine is bound by residues 38–40 (GGH), Asp57, Phe84, Asp100, and Gln107.

It belongs to the methyltransferase superfamily. RsmH family.

The protein localises to the cytoplasm. The catalysed reaction is cytidine(1402) in 16S rRNA + S-adenosyl-L-methionine = N(4)-methylcytidine(1402) in 16S rRNA + S-adenosyl-L-homocysteine + H(+). Functionally, specifically methylates the N4 position of cytidine in position 1402 (C1402) of 16S rRNA. The chain is Ribosomal RNA small subunit methyltransferase H from Acaryochloris marina (strain MBIC 11017).